The primary structure comprises 915 residues: MPRGSRARGSKRKRSWNTECPSFPGERPLQVRRAGLRTAGAAASLSEAWLRCGEGFQNTSGNPSLTAEEKTITEKHLELCPRPKQETTTSKSTSGLTDITWSSSGSDLSDEDKTLSQLQRDELQFIDWEIDSDRAEASDCDEFEDDEGAVEISDCASCASNQSLTSDEKLSELPKPSSIEILEYSSDSEKEDDLENVLLIDSESPHKYHVQFASDARQIMERLIDPRTKSTETILHTPQKPTAKFPRTPENSAKKKLLRGGLAERLNGLQNRERSAISLWRHQCISYQKTLSGRKSGVLTVKILELHEECAMQVAMCEQLLGSPATSSSQSVAPRPGAGLKVLFTKETAGYLRGRPQDTVRIFPPWQKLIIPSGSCPVILNTYFCEKVVAKEDSEKTCEVYCPDIPLPRRSISLAQMFVIKGLTNNSPEIQVVCSGVATTGTAWTHGHKEAKQRIPTSTPLRDSLLDVVESQGAASWPGAGVRVVVQRVYSLPSRDSTRGQQGASSGHTDPAGTRACLLVQDACGMFGEVHLEFTMSKARQLEGKSCSLVGMKVLQKVTRGRTAGIFSLIDTLWPPAIPLKTPGRDQPCEEIKTHLPPPALCYILTAHPNLGQIDIIDEDPIYKLYQPPVTRCLRDILQMNDLGTRCSFYATVIYQKPQLKSLLLLEQREIWLLVTDVTLQTKEERDPRLPKTLLVYVAPLCVLGSEVLEALAGAAPHSLFFKDALRDQGRIVCAERTVLLLQKPLLSVVSGASSCELPGPVMLDSLDSATPVNSICSVQGTVVGVDESTAFSWPVCDMCGNGRLEQRPEDRGAFSCGDCSRVVTSPVLKRHLQVFLDCRSRPQCRVKVKLLQRSISSLLRFAAGEDGSYEVKSVLGKEVGLLNCFVQSVTAHPTSCIGLEEIELLSAGGASAEH.

Positions 1-15 (MPRGSRARGSKRKRS) are enriched in basic residues. Disordered regions lie at residues 1-30 (MPRG…RPLQ) and 56-114 (FQNT…EDKT). A compositionally biased stretch (polar residues) spans 56–65 (FQNTSGNPSL). The span at 67-85 (AEEKTITEKHLELCPRPKQ) shows a compositional bias: basic and acidic residues. Residues 86–107 (ETTTSKSTSGLTDITWSSSGSD) show a composition bias toward polar residues. Positions 151–450 (EISDCASCAS…GTAWTHGHKE (300 aa)) are necessary for interaction with RAD51.

Found in a complex, at least composed of BLM, RAD51 and SPIDR; the complex formation is mediated by SPIDR. Interacts (via C-terminal region) with BLM; the interaction is direct. Interacts with RAD51; the interaction is direct. Interacts (via the C-terminal region) with FIGNL1 (via N-terminal one-half region); the interaction is direct.

Its subcellular location is the nucleus. Its function is as follows. Plays a role in DNA double-strand break (DBS) repair via homologous recombination (HR). Serves as a scaffolding protein that helps to promote the recruitment of DNA-processing enzymes like the helicase BLM and recombinase RAD51 to site of DNA damage, and hence contributes to maintain genomic integrity. The sequence is that of DNA repair-scaffolding protein (SPIDR) from Homo sapiens (Human).